The primary structure comprises 464 residues: uncharacterized protein (464 aa).

The region spanning 13-71 is the TRAM domain; the sequence is MLKVSDIIQIKIDKIVFGGEGLGYYNGFAVFVPMSIPEDELEIEIISIKKTYARGLIKN. The S-adenosyl-L-methionine site is built by Gln295, Tyr324, Glu345, and Asp393. Cys420 functions as the Nucleophile in the catalytic mechanism.

It belongs to the class I-like SAM-binding methyltransferase superfamily. RNA M5U methyltransferase family.

This is an uncharacterized protein from Fusobacterium nucleatum subsp. nucleatum (strain ATCC 25586 / DSM 15643 / BCRC 10681 / CIP 101130 / JCM 8532 / KCTC 2640 / LMG 13131 / VPI 4355).